The primary structure comprises 501 residues: Aldehyde dehydrogenase, cytosolic 1 (501 aa).

Position 2 is an N-acetylserine (S2). N6-acetyllysine is present on residues K91 and K128. 246–251 is a binding site for NAD(+); sequence GSTEVG. K252 bears the N6-acetyllysine mark. E269 serves as the catalytic Proton acceptor. C303 functions as the Nucleophile in the catalytic mechanism. N6-acetyllysine occurs at positions 353, 367, and 410. Phosphoserine is present on S413. Residues K419 and K435 each carry the N6-acetyllysine modification.

Belongs to the aldehyde dehydrogenase family. Homotetramer. As to expression, highest level in liver, high level in lung, low level in kidney and testis.

It is found in the cytoplasm. It carries out the reaction an aldehyde + NAD(+) + H2O = a carboxylate + NADH + 2 H(+). It functions in the pathway alcohol metabolism; ethanol degradation; acetate from ethanol: step 2/2. Functionally, can oxidize benzaldehyde, propionaldehyde and acetaldehyde. No detectable activity with retinal. This is Aldehyde dehydrogenase, cytosolic 1 from Mus musculus (Mouse).